The sequence spans 249 residues: Sec-independent protein translocase protein TatC (249 aa).

A run of 6 helical transmembrane segments spans residues 18–38, 69–89, 96–116, 151–171, 187–207, and 208–228; these read VSVG…KNIF, AIVI…APGL, VILP…AFSY, LILG…LAKV, IVVI…SQIF, and MALP…MVNP.

The protein belongs to the TatC family. As to quaternary structure, the Tat system comprises two distinct complexes: a TatABC complex, containing multiple copies of TatA, TatB and TatC subunits, and a separate TatA complex, containing only TatA subunits. Substrates initially bind to the TatABC complex, which probably triggers association of the separate TatA complex to form the active translocon.

It is found in the cell inner membrane. Part of the twin-arginine translocation (Tat) system that transports large folded proteins containing a characteristic twin-arginine motif in their signal peptide across membranes. Together with TatB, TatC is part of a receptor directly interacting with Tat signal peptides. This Helicobacter pylori (strain J99 / ATCC 700824) (Campylobacter pylori J99) protein is Sec-independent protein translocase protein TatC.